The following is a 379-amino-acid chain: MATCPVLQKETLFRTGVHAYRIPALLYLKKQKTLLAFAEKRASKTDEHAELIVLRRGSYNEATNRVKWQPEEVVTQAQLEGHRSMNPCPLYDKQTKTLFLFFIAVPGRVSEHHQLHTKVNVTRLCCVSSTDHGRTWSPIQDLTETTIGSTHQEWATFAVGPGHCLQLRNPAGSLLVPAYAYRKLHPAQKPTPFAFCFISLDHGHTWKLGNFVAENSLECQVAEVGTGAQRMVYLNARSFLGARVQAQSPNDGLDFQDNRVVSKLVEPPHGCHGSVVAFHNPISKPHALDTWLLYTHPTDSRNRTNLGVYLNQMPLDPTAWSEPTLLAMGICAYSDLQNMGQGPDGSPQFGCLYESGNYEEIIFLIFTLKQAFPTVFDAQ.

Positions 20-23 (YRIP) match the FRIP motif motif. Residues Arg21 and Arg41 each coordinate substrate. The Proton acceptor role is filled by Asp46. The stretch at 127-138 (VSSTDHGRTWSP) is one BNR 1 repeat. The substrate site is built by Tyr179 and Tyr181. Residues 197-208 (FISLDHGHTWKL) form a BNR 2 repeat. 3 residues coordinate substrate: Glu218, Arg237, and Arg303. Residue Arg303 is part of the active site. Catalysis depends on Tyr333, which acts as the Nucleophile. Glu354 is a catalytic residue.

It belongs to the glycosyl hydrolase 33 family. Highly expressed in heart.

It is found in the cytoplasm. The protein resides in the cytosol. It catalyses the reaction Hydrolysis of alpha-(2-&gt;3)-, alpha-(2-&gt;6)-, alpha-(2-&gt;8)- glycosidic linkages of terminal sialic acid residues in oligosaccharides, glycoproteins, glycolipids, colominic acid and synthetic substrates.. It carries out the reaction a ganglioside GD1a + H2O = a ganglioside GM1 + N-acetylneuraminate. The enzyme catalyses a ganglioside GM1 + H2O = a ganglioside GA1 + N-acetylneuraminate. The catalysed reaction is a ganglioside GT1b + H2O = a ganglioside GD1b + N-acetylneuraminate. It catalyses the reaction a ganglioside GD1b + H2O = a ganglioside GM1 + N-acetylneuraminate. It carries out the reaction a ganglioside GD3 + H2O = a ganglioside GM3 + N-acetylneuraminate. The enzyme catalyses a ganglioside GM3 + H2O = a beta-D-galactosyl-(1-&gt;4)-beta-D-glucosyl-(1&lt;-&gt;1)-ceramide + N-acetylneuraminate. The catalysed reaction is a ganglioside GM2 + H2O = a ganglioside GA2 + N-acetylneuraminate. It catalyses the reaction a neolactoside IV(3)-alpha-NeuAc-nLc4Cer(d18:1(4E)) + H2O = a neolactoside nLc4Cer(d18:1(4E)) + N-acetylneuraminate. It carries out the reaction N-acetyl-alpha-neuraminosyl-(2-&gt;3)-beta-D-galactosyl-(1-&gt;4)-D-glucose + H2O = lactose + N-acetylneuraminate. Exo-alpha-sialidase that catalyzes the hydrolytic cleavage of the terminal sialic acid (N-acetylneuraminic acid, Neu5Ac) of a glycan moiety in the catabolism of glycolipids, glycoproteins and oligosacharides. Recognizes sialyl linkage positions of the glycan moiety as well as the supramolecular organization of the sialoglycoconjugate. Displays preference for alpha-(2-&gt;3)-sialylated GD1a and GT1B gangliosides over alpha-(2-&gt;8)-sialylated GD1b, in both monomeric forms and micelles. Hydrolyzes exclusively monomeric GM1 ganglioside, but has no activity toward the miscellar form. Has lower sialidase activity for glycoproteins such as fetuin and TF/transferrin that carry a mixture of alpha-(2-&gt;3) and alpha-(2-&gt;6)-sialyl linkages. Cleaves milk oligosaccharide alpha-(2-&gt;3)-sialyllactose, but is inactive toward isomer alpha-(2-&gt;6)-sialyllactose isomer. Has no activity toward colominic acid, a homomer of alpha-(2-&gt;8)-linked Neu5Ac residues. This chain is Sialidase-2 (Neu2), found in Mus musculus (Mouse).